Consider the following 551-residue polypeptide: Tetrachloroethene reductive dehalogenase (551 aa).

The segment at residues 1–39 is a signal peptide (tat-type signal); it reads MGEINRRNFLKVSILGAAAAAVASASAVKGMVSPLVADA. A 4Fe-4S ferredoxin-type 1 domain is found at 411-440; it reads PRKFGVREFCRLCKKCADACPAQAISHEKD. Residues C420, C423, C426, C430, C467, C478, C481, and C485 each coordinate [4Fe-4S] cluster. The 19-residue stretch at 478-496 folds into the 4Fe-4S ferredoxin-type 2 domain; the sequence is CSNCVAVCSWNKVETWNHD.

It belongs to the PceA family. The cofactor is [4Fe-4S] cluster. Requires corrinoid as cofactor. In terms of processing, predicted to be exported by the Tat system. The position of the signal peptide cleavage has been experimentally proven.

Its subcellular location is the cytoplasm. The protein localises to the cell membrane. The protein resides in the secreted. It carries out the reaction trichloroethene + chloride + A + H(+) = tetrachloroethene + AH2. It catalyses the reaction trichloroethene + AH2 = (Z)-1,2-dichloroethene + chloride + A + H(+). PceT is required as a chaperone for prePceA maturation. In the absence or presence of exogenous vitamin B12, the intracellular corrinoid level decreases in fumarate-grown cells and the PceA precursor forms catalytically inactive, corrinoid-free multiprotein aggregates. Exogenous vitamin B12 is not incorporated into the PceA precursor, even though it affects the transposition of the pce gene cluster. Its function is as follows. Catalyzes the reductive dechlorination of tetrachloroethene (PCE) to trichloroethene (TCE) and of trichloroethene to cis-1,2-dichloroethene (DCE). Can also use various chlorinated ethanes such as tetrachloroethane, pentachloroethane and hexachloroethane. Reduced methyl viologen can act as the artificial electron donor. In Desulfitobacterium hafniense (strain Y51), this protein is Tetrachloroethene reductive dehalogenase.